An 88-amino-acid chain; its full sequence is Translation initiation factor IF-1 3 (88 aa).

The S1-like domain occupies 1-72; the sequence is MAKEELLELD…TKGCINFRHK (72 aa).

This sequence belongs to the IF-1 family. As to quaternary structure, component of the 30S ribosomal translation pre-initiation complex which assembles on the 30S ribosome in the order IF-2 and IF-3, IF-1 and N-formylmethionyl-tRNA(fMet); mRNA recruitment can occur at any time during PIC assembly.

The protein resides in the cytoplasm. In terms of biological role, one of the essential components for the initiation of protein synthesis. Stabilizes the binding of IF-2 and IF-3 on the 30S subunit to which N-formylmethionyl-tRNA(fMet) subsequently binds. Helps modulate mRNA selection, yielding the 30S pre-initiation complex (PIC). Upon addition of the 50S ribosomal subunit IF-1, IF-2 and IF-3 are released leaving the mature 70S translation initiation complex. The chain is Translation initiation factor IF-1 3 from Burkholderia orbicola (strain AU 1054).